A 148-amino-acid chain; its full sequence is 3-dehydroquinate dehydratase 2 (148 aa).

Residue tyrosine 24 is the Proton acceptor of the active site. Asparagine 75, histidine 81, and aspartate 88 together coordinate substrate. The Proton donor role is filled by histidine 101. Residues 102–103 (LS) and arginine 112 contribute to the substrate site.

This sequence belongs to the type-II 3-dehydroquinase family. In terms of assembly, homododecamer.

It carries out the reaction 3-dehydroquinate = 3-dehydroshikimate + H2O. It functions in the pathway metabolic intermediate biosynthesis; chorismate biosynthesis; chorismate from D-erythrose 4-phosphate and phosphoenolpyruvate: step 3/7. Catalyzes a trans-dehydration via an enolate intermediate. The protein is 3-dehydroquinate dehydratase 2 (aroQ2) of Pseudomonas aeruginosa (strain ATCC 15692 / DSM 22644 / CIP 104116 / JCM 14847 / LMG 12228 / 1C / PRS 101 / PAO1).